Reading from the N-terminus, the 498-residue chain is MRTNPTTSRPGVSTIEEKSVGRIDQIIGPVLDITFPPGKLPNIYNALIVKSRDTADKQINVTCEVQQLLGNNRVRAVAMSATDGLMRGMEVIDTGTPLSVPVGGATLGRIFNVLGEPIDNLGPVDTSATFPIHRSAPAFIELDTKLSIFETGIKVVDLLAPYRRGGKIGLFGGAGVGKTVLIMELINNIAKAHGGVSVFGGVGERTREGNDLYMEMKESGVINEKNIEESKVALVYGQMNEPPGARMRVGLTALTMAEYFRDVNKQDVLLFIDNIFRFVQAGSEVSALLGRMPSAVGYQPTLSTEMGSLQERITSTKKGSITSIQAVYVPADDLTDPAPATTFAHLDATTVLSRGLASKGIYPAVDPLDSTSTMLQPRIVGNEHYETAQRVKETLQRYKELQDIIAILGLDELSEEDRLTVARARKIERFLSQPFFVAEVFTGSPGKYVGLAETIRGFQLILSGELDGLPEQAFYLVGNIDEASTKAINLEEESKLKK.

ATP is bound at residue 172-179; sequence GGAGVGKT.

This sequence belongs to the ATPase alpha/beta chains family. In terms of assembly, F-type ATPases have 2 components, CF(1) - the catalytic core - and CF(0) - the membrane proton channel. CF(1) has five subunits: alpha(3), beta(3), gamma(1), delta(1), epsilon(1). CF(0) has four main subunits: a(1), b(1), b'(1) and c(9-12).

Its subcellular location is the plastid. It is found in the chloroplast thylakoid membrane. It catalyses the reaction ATP + H2O + 4 H(+)(in) = ADP + phosphate + 5 H(+)(out). In terms of biological role, produces ATP from ADP in the presence of a proton gradient across the membrane. The catalytic sites are hosted primarily by the beta subunits. The sequence is that of ATP synthase subunit beta, chloroplastic from Saccharum hybrid (Sugarcane).